The following is a 367-amino-acid chain: MKKQRVVVKIGSSSLADSHGGISTEQLSDHVAALARLKEDGHEVVLITSGAVAAGFSALGYPSRPVTIKGKQAAAAVGQSLLMQAYTEEFRKYGIVTAQLLLTRSDFSRKEQYSNAYATLGELLNRSALPIINENDSISLEELTFGDNDMLSALVSGLVSADMLMIFTDVNGLYDKNPQKNADAKKYYFLPEVTEEISSLAGDAGSKLGTGGMKSKIDAAKTALSLGVSVFIGTGRGQEKFVNVLKGKGDGTYVGNAPQKEMKMNKQWIALHSLVSGQIEVDAGAATAIIQHGKSLLPAGVTNVSRFFQVGEVVEVVTQQGRVIGKGQCTYSAEELIDVKGMQSQDIQVRGERHSYEVIHRDHWVSL.

Lys9 provides a ligand contact to ATP. Positions 49, 136, and 148 each coordinate substrate. Residues 168–169 (TD) and 210–216 (TGGMKSK) contribute to the ATP site. One can recognise a PUA domain in the interval 276-350 (SGQIEVDAGA…GMQSQDIQVR (75 aa)).

The protein belongs to the glutamate 5-kinase family.

It is found in the cytoplasm. The enzyme catalyses L-glutamate + ATP = L-glutamyl 5-phosphate + ADP. It participates in amino-acid biosynthesis; L-proline biosynthesis; L-glutamate 5-semialdehyde from L-glutamate: step 1/2. Functionally, catalyzes the transfer of a phosphate group to glutamate to form L-glutamate 5-phosphate. This chain is Glutamate 5-kinase, found in Bacillus cereus (strain ATCC 14579 / DSM 31 / CCUG 7414 / JCM 2152 / NBRC 15305 / NCIMB 9373 / NCTC 2599 / NRRL B-3711).